Reading from the N-terminus, the 352-residue chain is rRNA 2'-O-methyltransferase fibrillarin (352 aa).

Residues 1 to 115 (MGRPEFNRGG…GGAGGMRGGK (115 aa)) are disordered. Asymmetric dimethylarginine is present on residues Arg8, Arg16, Arg19, Arg23, Arg27, Arg35, Arg43, Arg51, Arg55, Arg58, Arg63, Arg67, Arg70, Arg75, Arg81, Arg85, Arg91, Arg95, Arg98, Arg102, Arg105, and Arg112. Positions 8-18 (RGGGGGGFRGG) are enriched in gly residues. Over residues 26–59 (SRGGFGGGGRGGYGGGDRGSFGGGDRGGFRGGRG) the composition is skewed to gly residues. Positions 66–113 (FRGGRGGGDRGGFGGRGSPRGGFGGRGSPRGGRGSPRGGRGGAGGMRG) are enriched in gly residues. S-adenosyl-L-methionine contacts are provided by residues 203-204 (TT), 222-223 (EF), 247-248 (DA), and 267-270 (DVAQ).

Belongs to the methyltransferase superfamily. Fibrillarin family. As to quaternary structure, component of box C/D small nucleolar ribonucleoprotein (snoRNP) particles. It is associated with the U3, U8 and U13 small nuclear RNAs. By homology to other fibrillarins, some or all of the N-terminal domain arginines are modified to asymmetric dimethylarginine (DMA).

It localises to the nucleus. The protein localises to the nucleolus. It is found in the nucleoplasm. It catalyses the reaction L-glutaminyl-[histone H2A] + S-adenosyl-L-methionine = N(5)-methyl-L-glutaminyl-[histone H2A] + S-adenosyl-L-homocysteine + H(+). In terms of biological role, S-adenosyl-L-methionine-dependent methyltransferase that has the ability to methylate both RNAs and proteins. Involved in pre-rRNA processing. Utilizes the methyl donor S-adenosyl-L-methionine to catalyze the site-specific 2'-hydroxyl methylation of ribose moieties in pre-ribosomal RNA. Site specificity is provided by a guide RNA that base pairs with the substrate. Methylation occurs at a characteristic distance from the sequence involved in base pairing with the guide RNA. Also acts as a protein methyltransferase by mediating methylation of 'Gln-105' of histone H2A (H2AQ105me), a modification that impairs binding of the FACT complex and is specifically present at 35S ribosomal DNA locus. Plays a role in modulation of nucleolus size most likely through regulating the ribosomal RNA (rRNA) pool. The sequence is that of rRNA 2'-O-methyltransferase fibrillarin from Caenorhabditis elegans.